We begin with the raw amino-acid sequence, 274 residues long: Aspartate/glutamate leucyltransferase (274 aa).

The protein belongs to the R-transferase family. Bpt subfamily.

The protein localises to the cytoplasm. It carries out the reaction N-terminal L-glutamyl-[protein] + L-leucyl-tRNA(Leu) = N-terminal L-leucyl-L-glutamyl-[protein] + tRNA(Leu) + H(+). It catalyses the reaction N-terminal L-aspartyl-[protein] + L-leucyl-tRNA(Leu) = N-terminal L-leucyl-L-aspartyl-[protein] + tRNA(Leu) + H(+). Functionally, functions in the N-end rule pathway of protein degradation where it conjugates Leu from its aminoacyl-tRNA to the N-termini of proteins containing an N-terminal aspartate or glutamate. This Ruegeria sp. (strain TM1040) (Silicibacter sp.) protein is Aspartate/glutamate leucyltransferase.